A 111-amino-acid polypeptide reads, in one-letter code: MICOS complex subunit MIC13 (111 aa).

Residues Val-8–Tyr-26 traverse the membrane as a helical segment.

This sequence belongs to the MICOS complex subunit Mic13 family. Component of the mitochondrial contact site and cristae organizing system (MICOS) complex.

Its subcellular location is the mitochondrion inner membrane. In terms of biological role, component of the MICOS complex, a large protein complex of the mitochondrial inner membrane that plays crucial roles in the maintenance of crista junctions, inner membrane architecture, and formation of contact sites to the outer membrane. Constituent of mature MICOS complex, it is required for the formation of cristae junction (CJ) and maintenance of cristae morphology. Required for the incorporation of MIC10 into the MICOS complex. The polypeptide is MICOS complex subunit MIC13 (Danio rerio (Zebrafish)).